The chain runs to 168 residues: Alkyl hydroperoxide reductase C (168 aa).

The region spanning 1-138 (EFIEVSEESF…LVNKIKAAQY (138 aa)) is the Thioredoxin domain. The active-site Cysteine sulfenic acid (-SOH) intermediate is the Cys28.

Belongs to the peroxiredoxin family. AhpC/Prx1 subfamily. In terms of assembly, homodimer; disulfide-linked, upon oxidation. 5 homodimers assemble to form a ring-like decamer.

Its subcellular location is the cytoplasm. It catalyses the reaction a hydroperoxide + NADH + H(+) = an alcohol + NAD(+) + H2O. Its function is as follows. Thiol-specific peroxidase that catalyzes the reduction of hydrogen peroxide and organic hydroperoxides to water and alcohols, respectively. Plays a role in cell protection against oxidative stress by detoxifying peroxides. The polypeptide is Alkyl hydroperoxide reductase C (Ferdinandcohnia aciditolerans (strain JCM 32973 / CCTCC AB 2017280 / YN-1) (Bacillus aciditolerans)).